A 337-amino-acid chain; its full sequence is Anthranilate phosphoribosyltransferase (337 aa).

Residues glycine 82, 85 to 86 (GD), threonine 90, 92 to 95 (NIST), 110 to 118 (KHGGRSVSS), and serine 122 contribute to the 5-phospho-alpha-D-ribose 1-diphosphate site. Glycine 82 provides a ligand contact to anthranilate. Serine 94 lines the Mg(2+) pocket. Arginine 168 lines the anthranilate pocket. 2 residues coordinate Mg(2+): aspartate 226 and glutamate 227.

It belongs to the anthranilate phosphoribosyltransferase family. As to quaternary structure, homodimer. The cofactor is Mg(2+).

It catalyses the reaction N-(5-phospho-beta-D-ribosyl)anthranilate + diphosphate = 5-phospho-alpha-D-ribose 1-diphosphate + anthranilate. It functions in the pathway amino-acid biosynthesis; L-tryptophan biosynthesis; L-tryptophan from chorismate: step 2/5. Functionally, catalyzes the transfer of the phosphoribosyl group of 5-phosphorylribose-1-pyrophosphate (PRPP) to anthranilate to yield N-(5'-phosphoribosyl)-anthranilate (PRA). The chain is Anthranilate phosphoribosyltransferase from Francisella tularensis subsp. holarctica (strain OSU18).